We begin with the raw amino-acid sequence, 262 residues long: MKKFIILLSLLILLPLTAASKPLIPIMKTLFTDVTGTVPDAEEIAHKAELFRQQTGIAPFIVVLPDINNEASLRQNGKAMLAHASSSLSDVKGSVLLLFTTREPRLIMITNGQVESGLDDKHLGLLIENHTLAYLNADLWYQGINNALAVLQAQILKQSTPPLTYYPHPGQQHENAPPGSTNTLGFIAWAATFILFSRIFYYTTRFIYALKFAVAMTIANMGYQALCLYIDNSFAITRISPLWAGLIGVCTFIAALLLTSKR.

Residues 1 to 4 are Cytoplasmic-facing; sequence MKKF. A helical transmembrane segment spans residues 5 to 27; the sequence is IILLSLLILLPLTAASKPLIPIM. At 28–182 the chain is on the periplasmic side; that stretch reads KTLFTDVTGT…HENAPPGSTN (155 aa). A helical transmembrane segment spans residues 183-202; it reads TLGFIAWAATFILFSRIFYY. The Cytoplasmic portion of the chain corresponds to 203 to 206; it reads TTRF. Residues 207 to 229 form a helical membrane-spanning segment; sequence IYALKFAVAMTIANMGYQALCLY. At 230–238 the chain is on the periplasmic side; sequence IDNSFAITR. Residues 239–258 form a helical membrane-spanning segment; sequence ISPLWAGLIGVCTFIAALLL. Topologically, residues 259-262 are cytoplasmic; that stretch reads TSKR.

It localises to the cell inner membrane. The polypeptide is Inner membrane protein YcfZ (ycfZ) (Escherichia coli (strain K12)).